Reading from the N-terminus, the 226-residue chain is Cytidylate kinase (226 aa).

10–18 (GPASSGKST) is an ATP binding site.

It belongs to the cytidylate kinase family. Type 1 subfamily.

The protein localises to the cytoplasm. The enzyme catalyses CMP + ATP = CDP + ADP. It carries out the reaction dCMP + ATP = dCDP + ADP. The polypeptide is Cytidylate kinase (Streptococcus pyogenes serotype M1).